The primary structure comprises 237 residues: NADPH-dependent FMN reductase ArsH (237 aa).

Residues 39 to 46 (SNRECSYS) and 102 to 107 (SPERHG) each bind FMN.

This sequence belongs to the ArsH family. As to quaternary structure, homotetramer. The cofactor is FMN.

Has NADPH-dependent FMN reductase activity and high NADPH-dependent ferric reductase activity with highest activity for Fe(3+) as substrate. No activity with NADH, iron trichloride, Cu(2+) or Ag(+). May be involved in cytosolic ferric iron assimilation as an NADPH-dependent ferric reductase in vivo. This chain is NADPH-dependent FMN reductase ArsH, found in Acidithiobacillus ferrooxidans (strain ATCC 23270 / DSM 14882 / CIP 104768 / NCIMB 8455) (Ferrobacillus ferrooxidans (strain ATCC 23270)).